The sequence spans 601 residues: AT-rich interactive domain-containing protein 3A (601 aa).

The segment at 1 to 224 (MKLQAVMETL…HMASQMPPPD (224 aa)) is disordered. Residues 60 to 89 (MAALAAMRAAAAGLGHPSSPGGSEDGPPIS) show a composition bias toward low complexity. 3 positions are modified to phosphoserine: S78, S82, and S89. Position 99 is a phosphothreonine (T99). S102 carries the phosphoserine modification. The segment covering 114 to 123 (GHAEGDRHLM) has biased composition (basic and acidic residues). S127 carries the phosphoserine modification. The interval 128-165 (DDDDTKSKWEEQELEELGEEEEEEEEEDDFEEEEEEEE) is acidic. Positions 139–166 (QELEELGEEEEEEEEEDDFEEEEEEEEG) are enriched in acidic residues. The 93-residue stretch at 243–335 (DPKRKEFLDD…YLYPYECERR (93 aa)) folds into the ARID domain. Phosphoserine occurs at positions 358 and 367. Glycyl lysine isopeptide (Lys-Gly) (interchain with G-Cter in SUMO2) cross-links involve residues K403, K404, K457, and K467. In terms of domain architecture, REKLES spans 449-546 (AALEQLREKL…GVLFAQPPPP (98 aa)). Residues 450-493 (ALEQLREKLESTEPPEKKMALVADEQQRLMQRAVQQSFLAMTAQ) are important for nuclear localization. Residues 495-518 (PMNIRINSQASESRQDSAVSLTSA) form a homodimerization region. Positions 542 to 562 (QPPPPTAPSAPGKGGVSSIGT) are important for cytoplasmic localization. The segment at 545–601 (PPTAPSAPGKGGVSSIGTNTTTGSRTGASGSTVSGGQVGLPGVSTPTMSSTSNNSLP) is disordered. Low complexity-rich tracts occupy residues 559 to 579 (SIGT…TVSG) and 588 to 601 (STPT…NSLP).

As to quaternary structure, homodimer. Heterodimer with ARID3B. Interacts with E2F1. Interacts with GTF2I and BTK. In terms of tissue distribution, B-cell specific in the adult. Expressed in B-cell progenitors, down-regulated in the immature B-cell stage, and is up-regulated again at later stages of B-lymphocyte differentiation.

The protein resides in the nucleus. It is found in the cytoplasm. Its function is as follows. Transcription factor involved in B-cell differentiation. Binds a VH promoter proximal site necessary for induced mu-heavy-chain transcription. Binds the minor groove of a restricted ATC sequence that is sufficient for nuclear matrix association. This sequence motif is present in matrix-associating regions (MARS) proximal to the promoter and flanking E mu. Activates E mu-driven transcription by binding these sites. May be involved in the control of cell cycle progression by the RB1/E2F1 pathway. The chain is AT-rich interactive domain-containing protein 3A (Arid3a) from Mus musculus (Mouse).